A 410-amino-acid chain; its full sequence is Acetate kinase (410 aa).

Asparagine 7 contacts Mg(2+). ATP is bound at residue lysine 14. Arginine 88 lines the substrate pocket. The active-site Proton donor/acceptor is aspartate 145. Residues 203 to 207, 278 to 280, and 326 to 330 each bind ATP; these read HAGNG, DTR, and GIGEN. Glutamate 379 lines the Mg(2+) pocket.

The protein belongs to the acetokinase family. In terms of assembly, homodimer. Mg(2+) is required as a cofactor. The cofactor is Mn(2+).

Its subcellular location is the cytoplasm. It catalyses the reaction acetate + ATP = acetyl phosphate + ADP. It participates in metabolic intermediate biosynthesis; acetyl-CoA biosynthesis; acetyl-CoA from acetate: step 1/2. In terms of biological role, catalyzes the formation of acetyl phosphate from acetate and ATP. Can also catalyze the reverse reaction. In Aster yellows witches'-broom phytoplasma (strain AYWB), this protein is Acetate kinase.